The sequence spans 324 residues: Sperm acrosome membrane-associated protein 6 (324 aa).

An N-terminal signal peptide occupies residues 1–26; it reads MALLALASAVPSALLALAVFRVPAWA. A CXXC motif motif is present at residues 27-30; the sequence is CLLC. Intrachain disulfides connect Cys27/Cys139, Cys30/Cys142, Cys41/Cys55, Cys124/Cys147, Cys128/Cys153, and Cys170/Cys226. Residues 27-295 are Extracellular-facing; it reads CLLCFTTYSE…RPEALTPSNL (269 aa). The CXXC motif motif lies at 139-142; it reads CSGC. The region spanning 150–236 is the Ig-like domain; that stretch reads PLDCPVQDVT…VIKQDQRPLA (87 aa). The N-linked (GlcNAc...) asparagine glycan is linked to Asn243. A helical membrane pass occupies residues 296-316; that stretch reads FLLAVLGALASASATVLAWMF. The Cytoplasmic segment spans residues 317–324; sequence FRWYCSGN.

This sequence belongs to the SPACA6 family. As to quaternary structure, forms a complex with IZUMO1 and TMEM81 on spermatocyte cell membrane required for fertilization. As to expression, detected at the sperm head, equatorial region, neck and midpiece (at protein level). Expressed in testis.

The protein resides in the cytoplasmic vesicle. It is found in the secretory vesicle. It localises to the acrosome membrane. Sperm protein required for fusion of sperm with the egg membrane during fertilization. May regulate the expression of sperm surface protein DCST2. This is Sperm acrosome membrane-associated protein 6 from Homo sapiens (Human).